A 905-amino-acid chain; its full sequence is Tudor domain-containing protein 5 (905 aa).

2 HTH OST-type domains span residues 6–79 and 128–204; these read LLAG…KAIG and AKPA…RSAV. The segment at 219–264 is disordered; it reads MQSTSPKQRLAGFSPKASSLPERRPEVSLDPSSVSKPEPVKEEQSF. The HTH OST-type 3 domain maps to 288–364; sequence VSQELKEKLR…ESHWMVVEFK (77 aa). Residues 368-393 form a disordered region; it reads TQPCEPELSPGDGTTSSPTGELQNPS. A compositionally biased stretch (polar residues) spans 379 to 393; that stretch reads DGTTSSPTGELQNPS. In terms of domain architecture, Tudor spans 523-581; sequence YVRPGQVCCVAPRDMWFYRVVIHEVFSETEVKVYYVDYGDITKVERHSLRFLKACYADL. The disordered stretch occupies residues 694–728; that stretch reads PDAEIDSQGNDSPSSCRTASNSESGETNLASIDVD. Polar residues predominate over residues 700–723; sequence SQGNDSPSSCRTASNSESGETNLA.

The protein belongs to the TDRD5 family.

The protein resides in the cytoplasm. Its function is as follows. Required during spermiogenesis to participate in the repression transposable elements and prevent their mobilization, which is essential for the germline integrity. Probably acts via the piRNA metabolic process, which mediates the repression of transposable elements during meiosis by forming complexes composed of piRNAs and Piwi proteins and govern the methylation and subsequent repression of transposons. The protein is Tudor domain-containing protein 5 (tdrd5) of Danio rerio (Zebrafish).